We begin with the raw amino-acid sequence, 341 residues long: Paired box protein Pax-9 (341 aa).

Residues 4-130 (AFGEVNQLGG…SSISRILRNK (127 aa)) constitute a DNA-binding region (paired). The tract at residues 7–63 (EVNQLGGVFVNGRPLPNAIRLRIVELAQLGIRPCDISRQLRVSHGCVSKILARYNET) is PAI subdomain. The interval 82–130 (TVVKHIRTYKQRDPGIFAWEIRDRLLADGVCDKYNVPSVSSISRILRNK) is RED subdomain. Positions 168 to 189 (AAAAKVPTPPGVPAIPGSVAMP) are interaction with KDM5B.

In terms of assembly, interacts with KDM5B.

It is found in the nucleus. In terms of biological role, transcription factor required for normal development of thymus, parathyroid glands, ultimobranchial bodies, teeth, skeletal elements of skull and larynx as well as distal limbs. In Callimico goeldii (Goeldi's marmoset), this protein is Paired box protein Pax-9 (PAX9).